The following is a 351-amino-acid chain: CREB homolog crh-2 (351 aa).

Disordered regions lie at residues 46 to 104 and 119 to 149; these read EPCT…EPLG and SPSA…HQQQ. Over residues 82–95 the composition is skewed to low complexity; sequence GSSSGSPSSSLSSP. Positions 282 to 345 constitute a bZIP domain; that stretch reads SLKIVRRKIK…RDLQQKLHQY (64 aa). Residues 284 to 304 are basic motif; sequence KIVRRKIKNKLSAQESRRKRK. A leucine-zipper region spans residues 307 to 314; that stretch reads IDALEGRL.

The protein belongs to the bZIP family.

The protein resides in the nucleus. In terms of biological role, transcription factor. Plays a role in regulating the developmentally arrested larval state known as dauer, when induced by long-term exposure to the Gram-negative bacterium P.aeruginosa PAO1, but dispensable for dauer formation induced by starvation. Involved in regulating expression of microRNA mir-243, during long-term exposure to P.aeruginosa PAO1. The polypeptide is CREB homolog crh-2 (Caenorhabditis elegans).